The sequence spans 526 residues: Keratin, type I cytoskeletal 10 (526 aa).

Residues 1–15 (MSVRYSSSKQYSSSR) show a composition bias toward low complexity. The disordered stretch occupies residues 1-29 (MSVRYSSSKQYSSSRSGGGGGGGSSLRIS). The segment at 1 to 126 (MSVRYSSSKQ…FGDGGLISGN (126 aa)) is head. A phosphoserine mark is found at serine 14, serine 16, serine 34, serine 45, serine 48, and serine 151. A coil 1A region spans residues 127–162 (QKITMQNLNDRLASYLDKVRALEESNYELEVKIKEW). Residues 127–441 (QKITMQNLND…SLLEGEGSSG (315 aa)) form the IF rod domain. The interval 163–183 (YEKYGNSRQREPRDYSKYYQT) is linker 1. The tract at residues 184–275 (IDDLKNQIFN…KNHEEEMRDL (92 aa)) is coil 1B. Residues 276–298 (QNVSTGDVNVEMNAAPGVDLTEL) are linker 12. Residues 299 to 437 (LNNMRSQYEQ…QTYRSLLEGE (139 aa)) form a coil 2 region. The interval 438–526 (GSSGGGSYGG…GESSSKGPRY (89 aa)) is tail. Residues 458–505 (GGGGYGGGSSSGGYGGGSSSGGGHGGSSGGSYGGGSSSGGGHGGGSSS) show a composition bias toward gly residues. The tract at residues 458–526 (GGGGYGGGSS…GESSSKGPRY (69 aa)) is disordered. Residues 506–526 (GGHKSTTTGSVGESSSKGPRY) show a composition bias toward low complexity.

Belongs to the intermediate filament family. As to quaternary structure, heterotetramer of two type I and two type II keratins. Heterodimer with KRT1. Two heterodimers of KRT1 and KRT10 form a heterotetramer. The KRT10 subunit in the heterotetramer is probably disulfide-linked.

The protein resides in the secreted. It localises to the extracellular space. The protein localises to the cell surface. Its subcellular location is the cytoplasm. Its function is as follows. Plays a role in the establishment of the epidermal barrier on plantar skin. Involved in the maintenance of cell layer development and keratin filament bundles in suprabasal cells of the epithelium. The sequence is that of Keratin, type I cytoskeletal 10 (KRT10) from Bos taurus (Bovine).